The chain runs to 224 residues: Putative adhesin A1C_06425 (224 aa).

The first 22 residues, 1-22 (MKKLLLIATTSATILSSSISFA), serve as a signal peptide directing secretion.

This is Putative adhesin A1C_06425 from Rickettsia akari (strain Hartford).